We begin with the raw amino-acid sequence, 298 residues long: Foldase protein PrsA 1 (298 aa).

A signal peptide spans 1 to 23 (MNKTWKKAATVLAFAGIALSATA). C24 carries the N-palmitoyl cysteine lipid modification. C24 is lipidated: S-diacylglycerol cysteine. The PpiC domain occupies 141–234 (QPEVTVQHIL…YGYHVIKMIK (94 aa)).

Belongs to the PrsA family.

The protein resides in the cell membrane. It carries out the reaction [protein]-peptidylproline (omega=180) = [protein]-peptidylproline (omega=0). Plays a major role in protein secretion by helping the post-translocational extracellular folding of several secreted proteins. In Lactobacillus johnsonii (strain CNCM I-12250 / La1 / NCC 533), this protein is Foldase protein PrsA 1 (prsA1).